Reading from the N-terminus, the 321-residue chain is CRISPR-associated endonuclease Cas1 2 (321 aa).

Residues E150, H213, and E228 each contribute to the Mn(2+) site.

It belongs to the CRISPR-associated endonuclease Cas1 family. Homodimer, forms a heterotetramer with a Cas2 homodimer. Mg(2+) is required as a cofactor. Requires Mn(2+) as cofactor.

In terms of biological role, CRISPR (clustered regularly interspaced short palindromic repeat), is an adaptive immune system that provides protection against mobile genetic elements (viruses, transposable elements and conjugative plasmids). CRISPR clusters contain spacers, sequences complementary to antecedent mobile elements, and target invading nucleic acids. CRISPR clusters are transcribed and processed into CRISPR RNA (crRNA). Acts as a dsDNA endonuclease. Involved in the integration of spacer DNA into the CRISPR cassette. This Moorella thermoacetica (strain ATCC 39073 / JCM 9320) protein is CRISPR-associated endonuclease Cas1 2.